Here is a 255-residue protein sequence, read N- to C-terminus: Probable cyclic nucleotide phosphodiesterase syc0937_d (255 aa).

Fe cation-binding residues include Asp-19, His-21, Asp-59, Asn-89, His-157, His-196, and His-198. Residues His-21, Asp-59, and 89–90 (NH) contribute to the AMP site. His-198 provides a ligand contact to AMP.

It belongs to the cyclic nucleotide phosphodiesterase class-III family. The cofactor is Fe(2+).

The sequence is that of Probable cyclic nucleotide phosphodiesterase syc0937_d from Synechococcus sp. (strain ATCC 27144 / PCC 6301 / SAUG 1402/1) (Anacystis nidulans).